An 85-amino-acid chain; its full sequence is Scratcher peptide (85 aa).

An N-terminal signal peptide occupies residues 1 to 24 (MTSVQSVTCCCLLWLMLSVQPITP). The propeptide occupies 25–38 (GSPGPAQLSRERSF). Residue E47 is modified to 4-carboxyglutamate. D67 carries the post-translational modification Aspartic acid 1-amide. Residues 68-85 (KRDVVSPRIRRRKRSKAM) constitute a propeptide that is removed on maturation.

It belongs to the conotoxin J superfamily. In terms of processing, contains 2 disulfide bonds. Expressed by the venom duct.

Its subcellular location is the secreted. In terms of biological role, causes scratching in mice. This is Scratcher peptide from Conus geographus (Geography cone).